An 82-amino-acid polypeptide reads, in one-letter code: Opistoporin-1 (82 aa).

An N-terminal signal peptide occupies residues 1–22; that stretch reads MNRKLLFVTLMVTMLVMQPSEG. Positions 67 to 82 are excised as a propeptide; sequence EAGQMPFDEFMDILYE.

Expressed by the venom gland.

It localises to the secreted. It is found in the target cell membrane. Its function is as follows. At high concentrations, acts as a pore former in cellular membranes and causes the leakage of the cells. At submicromolar concentrations, degranulates granulocytes and has a weak hemolytic activity against human erythrocytes. Also strongly inhibits the production of superoxide anions. Has a strong antibacterial activity against Gram-negative bacteria but is less active against Gram-positive bacteria. Also has antifungal activity. The protein is Opistoporin-1 of Opistophthalmus carinatus (African yellow leg scorpion).